We begin with the raw amino-acid sequence, 634 residues long: Lamin tail domain-containing protein 2 (634 aa).

The tract at residues 1–44 (MRWLRPAGRRREQESVSGHLGPPAGAPAAPETPTCLPDTTPHPA) is disordered. Positions 106–169 (SHSQEKLLQN…QKSCLLQLAR (64 aa)) form a coiled coil. Over residues 228 to 237 (FTNMEPSSKQ) the composition is skewed to polar residues. Disordered stretches follow at residues 228–349 (FTNM…TDPD) and 464–575 (HRIP…PAEA). Residues 276 to 287 (SSSGGADSDSSS) are compositionally biased toward low complexity. The segment covering 310–321 (SEQALVQAGSYS) has biased composition (polar residues). The span at 322 to 337 (RDSEDLQKTHSPRHGE) shows a compositional bias: basic and acidic residues. Residues 350 to 468 (HWSPELLQSP…EVLSEHRIPR (119 aa)) form the LTD domain. The span at 502–513 (PPRPPRPLRKGR) shows a compositional bias: basic residues. A compositionally biased stretch (basic and acidic residues) spans 540-550 (HAREGPARPEN).

This chain is Lamin tail domain-containing protein 2 (LMNTD2), found in Homo sapiens (Human).